The sequence spans 482 residues: tRNA sulfurtransferase (482 aa).

One can recognise a THUMP domain in the interval 61–165; that stretch reads LTIRDALTRI…DDRLLLIKGR (105 aa). ATP is bound by residues 183 to 184, Lys-265, Gly-287, and Gln-296; that span reads LI. Cys-344 and Cys-456 are oxidised to a cystine. Positions 404 to 482 constitute a Rhodanese domain; it reads FGPNDVILDI…GFKNVKVYRP (79 aa). Cys-456 (cysteine persulfide intermediate) is an active-site residue.

The protein belongs to the ThiI family. As to quaternary structure, interacts with IscS.

It is found in the cytoplasm. The catalysed reaction is [ThiI sulfur-carrier protein]-S-sulfanyl-L-cysteine + a uridine in tRNA + 2 reduced [2Fe-2S]-[ferredoxin] + ATP + H(+) = [ThiI sulfur-carrier protein]-L-cysteine + a 4-thiouridine in tRNA + 2 oxidized [2Fe-2S]-[ferredoxin] + AMP + diphosphate. It carries out the reaction [ThiS sulfur-carrier protein]-C-terminal Gly-Gly-AMP + S-sulfanyl-L-cysteinyl-[cysteine desulfurase] + AH2 = [ThiS sulfur-carrier protein]-C-terminal-Gly-aminoethanethioate + L-cysteinyl-[cysteine desulfurase] + A + AMP + 2 H(+). It participates in cofactor biosynthesis; thiamine diphosphate biosynthesis. Its function is as follows. Catalyzes the ATP-dependent transfer of a sulfur to tRNA to produce 4-thiouridine in position 8 of tRNAs, which functions as a near-UV photosensor. Also catalyzes the transfer of sulfur to the sulfur carrier protein ThiS, forming ThiS-thiocarboxylate. This is a step in the synthesis of thiazole, in the thiamine biosynthesis pathway. The sulfur is donated as persulfide by IscS. The chain is tRNA sulfurtransferase from Escherichia coli O157:H7.